The chain runs to 627 residues: Mitochondrial distribution and morphology protein 34 (627 aa).

Residues 1–195 form the SMP-LTD domain; sequence MAFNFNWSPL…LPAIIHRLSL (195 aa). Disordered regions lie at residues 209-230, 332-470, 486-557, and 586-627; these read SAQVTNPSLDGPGLDPLLNPPQ, ASLA…RTSP, LQRQ…SRPS, and RIQD…AYRH. Composition is skewed to low complexity over residues 215-225 and 332-341; these read PSLDGPGLDPL and ASLASSSHSR. Basic residues predominate over residues 360 to 372; that stretch reads RHSKAHARKRKKR. Positions 373-384 are enriched in basic and acidic residues; that stretch reads VVDLRRRPKSAD. A compositionally biased stretch (low complexity) spans 390-412; sequence SGESAYTETSTTTSAVSVFSGST. Positions 436–451 are enriched in basic and acidic residues; that stretch reads TLRDRIAARDDAERNS. Residues 528-557 are compositionally biased toward low complexity; the sequence is PNASNNYTSSSSPSARDPQQQQPQQLSRPS.

The protein belongs to the MDM34 family. In terms of assembly, component of the ER-mitochondria encounter structure (ERMES) or MDM complex, composed of MMM1, MDM10, MDM12 and MDM34.

The protein resides in the mitochondrion outer membrane. Its function is as follows. Component of the ERMES/MDM complex, which serves as a molecular tether to connect the endoplasmic reticulum (ER) and mitochondria. Components of this complex are involved in the control of mitochondrial shape and protein biogenesis, and function in nonvesicular lipid trafficking between the ER and mitochondria. MDM34 is required for the interaction of the ER-resident membrane protein MMM1 and the outer mitochondrial membrane-resident beta-barrel protein MDM10. This chain is Mitochondrial distribution and morphology protein 34, found in Blastomyces gilchristii (strain SLH14081) (Blastomyces dermatitidis).